A 371-amino-acid chain; its full sequence is ATP-dependent protease ATP-binding subunit-like protein AmiB (371 aa).

96 to 103 (GPTGVGKT) is an ATP binding site.

It belongs to the ClpX chaperone family. It depends on Mg(2+) as a cofactor.

Its function is as follows. Unlikely to encode a regulatory protein. Has ATPase activity. AmiB and AmiS may act jointly into a two component ABC transporter system. This is ATP-dependent protease ATP-binding subunit-like protein AmiB (amiB) from Pseudomonas aeruginosa (strain ATCC 15692 / DSM 22644 / CIP 104116 / JCM 14847 / LMG 12228 / 1C / PRS 101 / PAO1).